The sequence spans 506 residues: Maturase K (506 aa).

This sequence belongs to the intron maturase 2 family. MatK subfamily.

Its subcellular location is the plastid. The protein resides in the chloroplast. Functionally, usually encoded in the trnK tRNA gene intron. Probably assists in splicing its own and other chloroplast group II introns. This chain is Maturase K, found in Sullivantia sullivantii (Sullivant's coolwort).